A 420-amino-acid chain; its full sequence is rRNA methyltransferase 3, mitochondrial (420 aa).

A mitochondrion-targeting transit peptide spans 1–40 (MAALVRPARFVVRPLLQVVQAWDLDARRWVRALRRSPVKV). Residues 49–88 (EQKRAPGKQPRKAPSEASAQEQREKQPLEESASRAPSTWE) are disordered. Residues 69 to 80 (EQREKQPLEESA) show a composition bias toward basic and acidic residues. S-adenosyl-L-methionine is bound by residues Gly356, Ile380, and Leu389.

Belongs to the class IV-like SAM-binding methyltransferase superfamily. RNA methyltransferase TrmH family. As to expression, expressed at same level in normal liver and hepatocarcinoma.

Its subcellular location is the mitochondrion. The catalysed reaction is guanosine(1370) in 16S rRNA + S-adenosyl-L-methionine = 2'-O-methylguanosine(1370) in 16S rRNA + S-adenosyl-L-homocysteine + H(+). Its function is as follows. S-adenosyl-L-methionine-dependent 2'-O-ribose methyltransferase that catalyzes the formation of 2'-O-methylguanosine at position 1370 (Gm1370) in the 16S mitochondrial large subunit ribosomal RNA (mtLSU rRNA), a conserved modification in the peptidyl transferase domain of the mtLSU rRNA. Also required for formation of 2'-O-methyluridine at position 1369 (Um1369) mediated by MRM2. The protein is rRNA methyltransferase 3, mitochondrial of Homo sapiens (Human).